We begin with the raw amino-acid sequence, 524 residues long: Apoptosis inhibitor 5 (524 aa).

The segment at 2–360 is ARM-like and Heat-like helical repeats; that stretch reads PTVEELYRNY…HQLGRKLPDF (359 aa). Lys-251 bears the N6-acetyllysine mark. Residues 370–391 form a leucine-zipper region; sequence LKDFKIRLQYFARGLQVYIRQL. Position 399 is a phosphothreonine (Thr-399). The segment at 452–524 is disordered; that stretch reads GQKRASEDTT…RGNRSRGRLY (73 aa). The Nuclear localization signal motif lies at 454–475; that stretch reads KRASEDTTSGSPPKKSSAGPKR. Residues Ser-462, Ser-464, and Ser-469 each carry the phosphoserine modification. Residues 462–472 are compositionally biased toward low complexity; sequence SGSPPKKSSAG. The span at 487 to 497 shows a compositional bias: polar residues; the sequence is KYSSNLGNFNY. Arg-500 is modified (omega-N-methylarginine).

This sequence belongs to the API5 family. As to quaternary structure, monomer. Interacts with FGF2 and ACIN1. In terms of processing, acetylation at Lys-251 impairs antiapoptotic function. Expressed in all tissues tested, including heart, brain, placenta, lung, liver, skeletal muscle, kidney and pancreas. Highest levels in heart, pancreas and placenta. Highly expressed in several cancers. Preferentially expressed in squamous cell carcinoma versus adenocarcinoma in non-small cell lung cancer.

The protein localises to the nucleus. It localises to the cytoplasm. Functionally, antiapoptotic factor that may have a role in protein assembly. Negatively regulates ACIN1. By binding to ACIN1, it suppresses ACIN1 cleavage from CASP3 and ACIN1-mediated DNA fragmentation. Also known to efficiently suppress E2F1-induced apoptosis. Its depletion enhances the cytotoxic action of the chemotherapeutic drugs. This is Apoptosis inhibitor 5 from Homo sapiens (Human).